The primary structure comprises 473 residues: Putative F-box/LRR-repeat protein At3g59170 (473 aa).

An F-box domain is found at 6 to 54 (KDMINVLPDALLCHILSFLTTKEAASTSLLSRRWRYLLAFVPNLEFDDS). 5 LRR repeats span residues 168–194 (TIKI…YLQS), 196–221 (MFDE…VLDG), 229–254 (SFTV…GYMH), 333–364 (VLYL…TIKS), and 365–390 (DPNV…VFQG).

In Arabidopsis thaliana (Mouse-ear cress), this protein is Putative F-box/LRR-repeat protein At3g59170.